A 269-amino-acid polypeptide reads, in one-letter code: Formamidopyrimidine-DNA glycosylase (269 aa).

P2 serves as the catalytic Schiff-base intermediate with DNA. The Proton donor role is filled by E3. K57 (proton donor; for beta-elimination activity) is an active-site residue. DNA-binding residues include H90, R109, and K150. An FPG-type zinc finger spans residues 235 to 269; sequence QVYGRAGEPCRACGTPIESAKHGQRSTFFCPRCQR. R259 functions as the Proton donor; for delta-elimination activity in the catalytic mechanism.

This sequence belongs to the FPG family. In terms of assembly, monomer. It depends on Zn(2+) as a cofactor.

The catalysed reaction is Hydrolysis of DNA containing ring-opened 7-methylguanine residues, releasing 2,6-diamino-4-hydroxy-5-(N-methyl)formamidopyrimidine.. It carries out the reaction 2'-deoxyribonucleotide-(2'-deoxyribose 5'-phosphate)-2'-deoxyribonucleotide-DNA = a 3'-end 2'-deoxyribonucleotide-(2,3-dehydro-2,3-deoxyribose 5'-phosphate)-DNA + a 5'-end 5'-phospho-2'-deoxyribonucleoside-DNA + H(+). In terms of biological role, involved in base excision repair of DNA damaged by oxidation or by mutagenic agents. Acts as a DNA glycosylase that recognizes and removes damaged bases. Has a preference for oxidized purines, such as 7,8-dihydro-8-oxoguanine (8-oxoG). Has AP (apurinic/apyrimidinic) lyase activity and introduces nicks in the DNA strand. Cleaves the DNA backbone by beta-delta elimination to generate a single-strand break at the site of the removed base with both 3'- and 5'-phosphates. The protein is Formamidopyrimidine-DNA glycosylase of Serratia proteamaculans (strain 568).